The following is an 877-amino-acid chain: Leucine--tRNA ligase (877 aa).

Positions 43-53 match the 'HIGH' region motif; the sequence is PYPSGRIHMGH. Residues 628–632 carry the 'KMSKS' region motif; that stretch reads KMSKS. K631 is a binding site for ATP.

This sequence belongs to the class-I aminoacyl-tRNA synthetase family.

The protein resides in the cytoplasm. It carries out the reaction tRNA(Leu) + L-leucine + ATP = L-leucyl-tRNA(Leu) + AMP + diphosphate. The chain is Leucine--tRNA ligase from Brucella canis (strain ATCC 23365 / NCTC 10854 / RM-666).